We begin with the raw amino-acid sequence, 273 residues long: Serine acetyltransferase (273 aa).

The protein belongs to the transferase hexapeptide repeat family. Homohexamer. Dimer of a homotrimer.

It localises to the cytoplasm. It carries out the reaction L-serine + acetyl-CoA = O-acetyl-L-serine + CoA. It functions in the pathway amino-acid biosynthesis; L-cysteine biosynthesis; L-cysteine from L-serine: step 1/2. This Shigella flexneri protein is Serine acetyltransferase (cysE).